The primary structure comprises 565 residues: Periplasmic trehalase (565 aa).

Positions 1-30 (MKSPAPSRPQKMALIPACIFLCFAALSVQA) are cleaved as a signal peptide. Substrate contacts are provided by residues R152, 159–160 (WD), N196, 205–207 (RSQ), 277–279 (RPE), and G310. Active-site proton donor/acceptor residues include D312 and E496. Position 511 (E511) interacts with substrate. Positions 538 to 565 (PCDNVPATRPTVKSATTQPSTKEAQPTP) are disordered. Residues 548 to 565 (TVKSATTQPSTKEAQPTP) are compositionally biased toward polar residues.

It belongs to the glycosyl hydrolase 37 family. In terms of assembly, monomer.

The protein resides in the periplasm. It catalyses the reaction alpha,alpha-trehalose + H2O = alpha-D-glucose + beta-D-glucose. In terms of biological role, provides the cells with the ability to utilize trehalose at high osmolarity by splitting it into glucose molecules that can subsequently be taken up by the phosphotransferase-mediated uptake system. This Escherichia coli (strain K12 / MC4100 / BW2952) protein is Periplasmic trehalase.